Consider the following 73-residue polypeptide: Small, acid-soluble spore protein C5 (73 aa).

This sequence belongs to the alpha/beta-type SASP family.

Functionally, SASP are bound to spore DNA. They are double-stranded DNA-binding proteins that cause DNA to change to an a-like conformation. They protect the DNA backbone from chemical and enzymatic cleavage and are thus involved in dormant spore's high resistance to UV light. The polypeptide is Small, acid-soluble spore protein C5 (SASP-C5) (Priestia megaterium (Bacillus megaterium)).